The primary structure comprises 66 residues: Protein KleD (66 aa).

The H-T-H motif DNA-binding region spans 33–52 (VAVRSGNEWQQVTKWVEPAR).

This chain is Protein KleD (kleD), found in Escherichia coli.